The chain runs to 242 residues: Uridylate kinase (242 aa).

K15–G18 is an ATP binding site. The tract at residues G23–G28 is involved in allosteric activation by GTP. G57 contacts UMP. ATP-binding residues include G58 and R62. UMP contacts are provided by residues D77 and T138–T145. ATP is bound by residues T165, Y171, and D174.

This sequence belongs to the UMP kinase family. Homohexamer.

The protein localises to the cytoplasm. It catalyses the reaction UMP + ATP = UDP + ADP. It functions in the pathway pyrimidine metabolism; CTP biosynthesis via de novo pathway; UDP from UMP (UMPK route): step 1/1. Allosterically activated by GTP. Inhibited by UTP. Its function is as follows. Catalyzes the reversible phosphorylation of UMP to UDP. This chain is Uridylate kinase, found in Photorhabdus laumondii subsp. laumondii (strain DSM 15139 / CIP 105565 / TT01) (Photorhabdus luminescens subsp. laumondii).